Consider the following 100-residue polypeptide: Small ribosomal subunit protein uS14 (100 aa).

Belongs to the universal ribosomal protein uS14 family. As to quaternary structure, part of the 30S ribosomal subunit. Contacts proteins S3 and S10.

In terms of biological role, binds 16S rRNA, required for the assembly of 30S particles and may also be responsible for determining the conformation of the 16S rRNA at the A site. In Rippkaea orientalis (strain PCC 8801 / RF-1) (Cyanothece sp. (strain PCC 8801)), this protein is Small ribosomal subunit protein uS14.